We begin with the raw amino-acid sequence, 413 residues long: Aspartate aminotransferase, cytoplasmic (413 aa).

L-aspartate is bound by residues Gly-39, Trp-141, and Asn-195. N6-(pyridoxal phosphate)lysine is present on Lys-259. Arg-387 provides a ligand contact to L-aspartate.

This sequence belongs to the class-I pyridoxal-phosphate-dependent aminotransferase family. As to quaternary structure, homodimer. It depends on pyridoxal 5'-phosphate as a cofactor.

The protein localises to the cytoplasm. It catalyses the reaction L-aspartate + 2-oxoglutarate = oxaloacetate + L-glutamate. It carries out the reaction L-cysteine + 2-oxoglutarate = 2-oxo-3-sulfanylpropanoate + L-glutamate. The enzyme catalyses (2S)-2-aminobutanoate + 2-oxoglutarate = 2-oxobutanoate + L-glutamate. The catalysed reaction is 3-sulfino-L-alanine + 2-oxoglutarate = 3-sulfinopyruvate + L-glutamate. Biosynthesis of L-glutamate from L-aspartate or L-cysteine. Important regulator of levels of glutamate, the major excitatory neurotransmitter of the vertebrate central nervous system. Acts as a scavenger of glutamate in brain neuroprotection. The aspartate aminotransferase activity is involved in hepatic glucose synthesis during development and in adipocyte glyceroneogenesis. Using L-cysteine as substrate, regulates levels of mercaptopyruvate, an important source of hydrogen sulfide. Mercaptopyruvate is converted into H(2)S via the action of 3-mercaptopyruvate sulfurtransferase (3MST). Hydrogen sulfide is an important synaptic modulator and neuroprotectant in the brain. The polypeptide is Aspartate aminotransferase, cytoplasmic (Sus scrofa (Pig)).